A 146-amino-acid chain; its full sequence is uncharacterized protein (146 aa).

This is an uncharacterized protein from Escherichia coli O157:H7.